An 851-amino-acid chain; its full sequence is UPF0508 protein CAGL0M08074g (851 aa).

The protein belongs to the UPF0508 family.

This is UPF0508 protein CAGL0M08074g from Candida glabrata (strain ATCC 2001 / BCRC 20586 / JCM 3761 / NBRC 0622 / NRRL Y-65 / CBS 138) (Yeast).